The primary structure comprises 657 residues: Leishmanolysin (657 aa).

An N-terminal signal peptide occupies residues methionine 1–alanine 41. Positions histidine 42–valine 102 are cleaved as a propeptide — activation peptide. At glycine 44–alanine 611 the chain is on the extracellular side. N-linked (GlcNAc...) asparagine glycosylation is present at asparagine 107. 2 disulfide bridges follow: cysteine 127-cysteine 144 and cysteine 193-cysteine 232. Residue histidine 266 coordinates Zn(2+). Residue glutamate 267 is part of the active site. Zn(2+) is bound at residue histidine 270. A glycan (N-linked (GlcNAc...) asparagine) is linked at asparagine 302. 7 cysteine pairs are disulfide-bonded: cysteine 316–cysteine 388, cysteine 395–cysteine 458, cysteine 408–cysteine 427, cysteine 417–cysteine 492, cysteine 469–cysteine 513, cysteine 518–cysteine 568, and cysteine 538–cysteine 561. Histidine 336 lines the Zn(2+) pocket. Asparagine 399, asparagine 409, asparagine 445, asparagine 466, and asparagine 501 each carry an N-linked (GlcNAc...) asparagine glycan. Residues threonine 612 to valine 632 form a helical membrane-spanning segment. Residues serine 633–glutamate 657 lie on the Cytoplasmic side of the membrane.

The protein belongs to the peptidase M8 family. Zn(2+) serves as cofactor.

Its subcellular location is the membrane. It catalyses the reaction Preference for hydrophobic residues at P1 and P1' and basic residues at P2' and P3'. A model nonapeptide is cleaved at -Ala-Tyr-|-Leu-Lys-Lys-.. Its function is as follows. Has an integral role during the infection of macrophages in the mammalian host. The sequence is that of Leishmanolysin (mspC) from Leishmania tropica.